A 131-amino-acid chain; its full sequence is 1,4-dihydroxy-2-naphthoyl-CoA hydrolase (131 aa).

The active site involves Asp-7.

The protein belongs to the 4-hydroxybenzoyl-CoA thioesterase family. DHNA-CoA hydrolase subfamily.

The catalysed reaction is 1,4-dihydroxy-2-naphthoyl-CoA + H2O = 1,4-dihydroxy-2-naphthoate + CoA + H(+). It participates in cofactor biosynthesis; phylloquinone biosynthesis. Its pathway is quinol/quinone metabolism; 1,4-dihydroxy-2-naphthoate biosynthesis; 1,4-dihydroxy-2-naphthoate from chorismate: step 7/7. In terms of biological role, catalyzes the hydrolysis of 1,4-dihydroxy-2-naphthoyl-CoA (DHNA-CoA) to 1,4-dihydroxy-2-naphthoate (DHNA), a reaction involved in phylloquinone (vitamin K1) biosynthesis. The chain is 1,4-dihydroxy-2-naphthoyl-CoA hydrolase from Synechococcus sp. (strain RCC307).